Reading from the N-terminus, the 553-residue chain is Putative transport protein YidE (553 aa).

Helical transmembrane passes span 4 to 24, 28 to 48, 65 to 85, 95 to 115, and 158 to 178; these read IALT…IGNV, GIGL…HFVS, FGLI…FFAS, LFAV…HKLF, and MSYA…MWML. RCK C-terminal domains lie at 191–276 and 279–361; these read QQHE…VIGQ and DTSL…VLGN. 6 helical membrane passes run 371-391, 393-413, 439-459, 464-484, 493-513, and 533-553; these read MLPV…PVFV, GFPA…ALIL, IVLF…NTLV, LSWI…VGIL, YLTM…LAFA, and LVMF…WSIG.

Belongs to the AAE transporter (TC 2.A.81) family. YidE subfamily.

It localises to the cell membrane. This chain is Putative transport protein YidE, found in Escherichia coli O7:K1 (strain IAI39 / ExPEC).